A 209-amino-acid polypeptide reads, in one-letter code: Imidazole glycerol phosphate synthase subunit HisH (209 aa).

Residues 1 to 205 (MIAIIDYGMG…QGVVEAWKSS (205 aa)) enclose the Glutamine amidotransferase type-1 domain. Cys79 (nucleophile) is an active-site residue. Active-site residues include His180 and Glu182.

In terms of assembly, heterodimer of HisH and HisF.

The protein resides in the cytoplasm. It carries out the reaction 5-[(5-phospho-1-deoxy-D-ribulos-1-ylimino)methylamino]-1-(5-phospho-beta-D-ribosyl)imidazole-4-carboxamide + L-glutamine = D-erythro-1-(imidazol-4-yl)glycerol 3-phosphate + 5-amino-1-(5-phospho-beta-D-ribosyl)imidazole-4-carboxamide + L-glutamate + H(+). It catalyses the reaction L-glutamine + H2O = L-glutamate + NH4(+). It participates in amino-acid biosynthesis; L-histidine biosynthesis; L-histidine from 5-phospho-alpha-D-ribose 1-diphosphate: step 5/9. Functionally, IGPS catalyzes the conversion of PRFAR and glutamine to IGP, AICAR and glutamate. The HisH subunit catalyzes the hydrolysis of glutamine to glutamate and ammonia as part of the synthesis of IGP and AICAR. The resulting ammonia molecule is channeled to the active site of HisF. This is Imidazole glycerol phosphate synthase subunit HisH from Bacillus cereus (strain B4264).